Reading from the N-terminus, the 170-residue chain is Inner membrane protein p22 (170 aa).

Residues 1 to 3 (MST) are Intravirion-facing. A helical transmembrane segment spans residues 4-24 (LLIALIALIVLLIIILVVFLY). Over 25–170 (YKKQQPPKKV…LYLPRNHKYA (146 aa)) the chain is Virion surface.

It belongs to the asfivirus inner membrane protein p22 family.

It is found in the virion membrane. The protein resides in the host cell membrane. The protein is Inner membrane protein p22 of Ornithodoros (relapsing fever ticks).